The primary structure comprises 363 residues: Peptide chain release factor 2 (363 aa).

Q251 carries the post-translational modification N5-methylglutamine.

Belongs to the prokaryotic/mitochondrial release factor family. Methylated by PrmC. Methylation increases the termination efficiency of RF2.

It is found in the cytoplasm. Its function is as follows. Peptide chain release factor 2 directs the termination of translation in response to the peptide chain termination codons UGA and UAA. In Helicobacter pylori (strain J99 / ATCC 700824) (Campylobacter pylori J99), this protein is Peptide chain release factor 2 (prfB).